A 364-amino-acid polypeptide reads, in one-letter code: DNA polymerase IV (364 aa).

The region spanning Ile-14 to Gly-198 is the UmuC domain. Mg(2+) contacts are provided by Asp-18 and Asp-116. Residue Glu-117 is part of the active site.

Belongs to the DNA polymerase type-Y family. Monomer. Mg(2+) serves as cofactor.

Its subcellular location is the cytoplasm. It catalyses the reaction DNA(n) + a 2'-deoxyribonucleoside 5'-triphosphate = DNA(n+1) + diphosphate. Poorly processive, error-prone DNA polymerase involved in untargeted mutagenesis. Copies undamaged DNA at stalled replication forks, which arise in vivo from mismatched or misaligned primer ends. These misaligned primers can be extended by PolIV. Exhibits no 3'-5' exonuclease (proofreading) activity. May be involved in translesional synthesis, in conjunction with the beta clamp from PolIII. This Streptococcus pyogenes serotype M5 (strain Manfredo) protein is DNA polymerase IV.